The sequence spans 292 residues: UPF0761 membrane protein Ping_3482 (292 aa).

Helical transmembrane passes span 43–63, 100–120, 139–159, 179–199, 209–229, and 243–263; these read LLSI…FPVF, MSMM…STID, FTIY…SLAL, LLSL…YTLV, ALIG…LFRL, and ALAV…IVLI.

This sequence belongs to the UPF0761 family.

It is found in the cell inner membrane. In Psychromonas ingrahamii (strain DSM 17664 / CCUG 51855 / 37), this protein is UPF0761 membrane protein Ping_3482.